Here is a 150-residue protein sequence, read N- to C-terminus: SsrA-binding protein (150 aa).

The protein belongs to the SmpB family.

It is found in the cytoplasm. Required for rescue of stalled ribosomes mediated by trans-translation. Binds to transfer-messenger RNA (tmRNA), required for stable association of tmRNA with ribosomes. tmRNA and SmpB together mimic tRNA shape, replacing the anticodon stem-loop with SmpB. tmRNA is encoded by the ssrA gene; the 2 termini fold to resemble tRNA(Ala) and it encodes a 'tag peptide', a short internal open reading frame. During trans-translation Ala-aminoacylated tmRNA acts like a tRNA, entering the A-site of stalled ribosomes, displacing the stalled mRNA. The ribosome then switches to translate the ORF on the tmRNA; the nascent peptide is terminated with the 'tag peptide' encoded by the tmRNA and targeted for degradation. The ribosome is freed to recommence translation, which seems to be the essential function of trans-translation. The chain is SsrA-binding protein from Flavobacterium psychrophilum (strain ATCC 49511 / DSM 21280 / CIP 103535 / JIP02/86).